Here is a 279-residue protein sequence, read N- to C-terminus: Digeranylgeranylglyceryl phosphate synthase (279 aa).

8 helical membrane passes run 5–25 (GFFA…AIVA), 27–47 (LIAT…VLLV), 90–110 (FLLG…IALV), 127–147 (FFGN…GGAY), 148–168 (AGWH…LAML), 198–218 (KTAL…AVPY), 219–239 (LWWG…ILFA), and 259–279 (TLLK…AVFL).

Belongs to the UbiA prenyltransferase family. DGGGP synthase subfamily. It depends on Mg(2+) as a cofactor.

The protein resides in the cell membrane. It catalyses the reaction sn-3-O-(geranylgeranyl)glycerol 1-phosphate + (2E,6E,10E)-geranylgeranyl diphosphate = 2,3-bis-O-(geranylgeranyl)-sn-glycerol 1-phosphate + diphosphate. It functions in the pathway membrane lipid metabolism; glycerophospholipid metabolism. Functionally, prenyltransferase that catalyzes the transfer of the geranylgeranyl moiety of geranylgeranyl diphosphate (GGPP) to the C2 hydroxyl of (S)-3-O-geranylgeranylglyceryl phosphate (GGGP). This reaction is the second ether-bond-formation step in the biosynthesis of archaeal membrane lipids. This Methanoregula boonei (strain DSM 21154 / JCM 14090 / 6A8) protein is Digeranylgeranylglyceryl phosphate synthase.